The sequence spans 574 residues: Uric acid-xanthine permease (574 aa).

Residues 1–20 (MDNSIHSTDGPDSVIPNSNP) form a disordered region. The next 12 membrane-spanning stretches (helical) occupy residues 77-97 (LLAF…VVTP), 111-131 (LQQY…MVQI), 141-161 (YYIG…ISVA), 188-209 (AYGA…LAFV), 217-237 (IFPP…LIGT), 264-284 (LPWG…SIIL), 296-315 (CSVV…CGYF), 338-361 (VYGP…IGDV), 427-447 (CCLI…IVAI), 451-471 (VMGG…QAIV), 482-502 (FILT…TWFG), and 522-542 (LVLE…NAIM). Residues 555 to 574 (MPVSAHDNRDGEAEYQSKQA) are disordered. Lys-572 is covalently cross-linked (Glycyl lysine isopeptide (Lys-Gly) (interchain with G-Cter in ubiquitin)).

This sequence belongs to the nucleobase:cation symporter-2 (NCS2) (TC 2.A.40) family. In terms of processing, ubiquitinated by hulA. Ubiquitination leads to internalization, sorting into the endosomal pathway to the vacuolar lumen where uapA is eventually degraded.

It localises to the cell membrane. Uric acid-xanthine transporter. In Emericella nidulans (strain FGSC A4 / ATCC 38163 / CBS 112.46 / NRRL 194 / M139) (Aspergillus nidulans), this protein is Uric acid-xanthine permease (uapA).